The following is a 203-amino-acid chain: ATP-dependent Clp protease proteolytic subunit 2 (203 aa).

Catalysis depends on Ser-98, which acts as the Nucleophile. His-123 is an active-site residue.

It belongs to the peptidase S14 family. As to quaternary structure, fourteen ClpP subunits assemble into 2 heptameric rings which stack back to back to give a disk-like structure with a central cavity, resembling the structure of eukaryotic proteasomes.

Its subcellular location is the cytoplasm. The enzyme catalyses Hydrolysis of proteins to small peptides in the presence of ATP and magnesium. alpha-casein is the usual test substrate. In the absence of ATP, only oligopeptides shorter than five residues are hydrolyzed (such as succinyl-Leu-Tyr-|-NHMec, and Leu-Tyr-Leu-|-Tyr-Trp, in which cleavage of the -Tyr-|-Leu- and -Tyr-|-Trp bonds also occurs).. Functionally, cleaves peptides in various proteins in a process that requires ATP hydrolysis. Has a chymotrypsin-like activity. Plays a major role in the degradation of misfolded proteins. This is ATP-dependent Clp protease proteolytic subunit 2 from Chlamydia pneumoniae (Chlamydophila pneumoniae).